Here is a 389-residue protein sequence, read N- to C-terminus: UDP-GlcNAc:betaGal beta-1,3-N-acetylglucosaminyltransferase 8 (389 aa).

The Cytoplasmic portion of the chain corresponds to 1–7 (MRCRKCQ). A helical; Signal-anchor for type II membrane protein transmembrane segment spans residues 8-24 (LCLSALLTLLGLKVYIE). The Lumenal portion of the chain corresponds to 25-389 (WTSESWLKKA…RHLWVPELQC (365 aa)). Residues 36–57 (PRGALPSPTPPNAEPTLPTNLS) are disordered. N-linked (GlcNAc...) asparagine glycosylation is found at Asn-55 and Asn-212.

Belongs to the glycosyltransferase 31 family. As to quaternary structure, interacts with B3GNT2; this interaction greatly increases B3GNT2 catalytic activity, independently of B3GNT8 enzymatic activity.

The protein localises to the golgi apparatus membrane. It participates in protein modification; protein glycosylation. In terms of biological role, beta-1,3-N-acetylglucosaminyltransferase that plays a role in the elongation of specific branch structures of multiantennary N-glycans. Has strong activity towards tetraantennary N-glycans and 2,6 triantennary glycans. This is UDP-GlcNAc:betaGal beta-1,3-N-acetylglucosaminyltransferase 8 from Mus musculus (Mouse).